We begin with the raw amino-acid sequence, 176 residues long: Large ribosomal subunit protein bL12m (176 aa).

Belongs to the bacterial ribosomal protein bL12 family. As to quaternary structure, component of the mitochondrial large ribosomal subunit (mt-LSU). Mature N.crassa 74S mitochondrial ribosomes consist of a small (37S) and a large (54S) subunit. The 37S small subunit contains a 16S ribosomal RNA (16S mt-rRNA) and 32 different proteins. The 54S large subunit contains a 23S rRNA (23S mt-rRNA) and 42 different proteins.

It localises to the mitochondrion. In terms of biological role, component of the mitochondrial ribosome (mitoribosome), a dedicated translation machinery responsible for the synthesis of mitochondrial genome-encoded proteins, including at least some of the essential transmembrane subunits of the mitochondrial respiratory chain. The mitoribosomes are attached to the mitochondrial inner membrane and translation products are cotranslationally integrated into the membrane. This is Large ribosomal subunit protein bL12m (mrpl12) from Neurospora crassa (strain ATCC 24698 / 74-OR23-1A / CBS 708.71 / DSM 1257 / FGSC 987).